Here is a 389-residue protein sequence, read N- to C-terminus: Serpin B13 (389 aa).

This sequence belongs to the serpin family. Ov-serpin subfamily.

It is found in the cytoplasm. In terms of biological role, may play a role in the proliferation or differentiation of keratinocytes. In Mus musculus (Mouse), this protein is Serpin B13 (Serpinb13).